We begin with the raw amino-acid sequence, 205 residues long: ATP-dependent Clp protease proteolytic subunit (205 aa).

The active-site Nucleophile is the serine 108. Histidine 133 is an active-site residue.

The protein belongs to the peptidase S14 family. Fourteen ClpP subunits assemble into 2 heptameric rings which stack back to back to give a disk-like structure with a central cavity, resembling the structure of eukaryotic proteasomes.

It is found in the cytoplasm. The catalysed reaction is Hydrolysis of proteins to small peptides in the presence of ATP and magnesium. alpha-casein is the usual test substrate. In the absence of ATP, only oligopeptides shorter than five residues are hydrolyzed (such as succinyl-Leu-Tyr-|-NHMec, and Leu-Tyr-Leu-|-Tyr-Trp, in which cleavage of the -Tyr-|-Leu- and -Tyr-|-Trp bonds also occurs).. In terms of biological role, cleaves peptides in various proteins in a process that requires ATP hydrolysis. Has a chymotrypsin-like activity. Plays a major role in the degradation of misfolded proteins. In Alcanivorax borkumensis (strain ATCC 700651 / DSM 11573 / NCIMB 13689 / SK2), this protein is ATP-dependent Clp protease proteolytic subunit.